We begin with the raw amino-acid sequence, 20 residues long: MNRLKEIFQKEITPALVSKF.

Belongs to the universal ribosomal protein uL5 family. Part of the 50S ribosomal subunit; part of the 5S rRNA/L5/L18/L25 subcomplex. Contacts the 5S rRNA and the P site tRNA. Forms a bridge to the 30S subunit in the 70S ribosome.

Its function is as follows. This is one of the proteins that bind and probably mediate the attachment of the 5S RNA into the large ribosomal subunit, where it forms part of the central protuberance. In the 70S ribosome it contacts protein S13 of the 30S subunit (bridge B1b), connecting the two subunits; this bridge is implicated in subunit movement. Contacts the P site tRNA; the 5S rRNA and some of its associated proteins might help stabilize positioning of ribosome-bound tRNAs. This chain is Large ribosomal subunit protein uL5 (rplE), found in Bacillus cereus.